We begin with the raw amino-acid sequence, 331 residues long: Transmembrane protein 59-like (331 aa).

Residues 1 to 21 (MAAVALPLLLLLASPATPTPA) form the signal peptide. Residues 15–62 (PATPTPARDPFSPQLGDTQRCQQRCRQRHPGLPPAQPEPEGPSESPNN) form a disordered region. The segment covering 45 to 54 (GLPPAQPEPE) has biased composition (pro residues). Residue Asn90 is glycosylated (N-linked (GlcNAc...) asparagine). Residues 258-278 (VLFCCLFLSVLIILWLSCCTL) form a helical membrane-spanning segment. Residues 329–331 (TTL) carry the Microbody targeting signal motif.

The protein belongs to the TMEM59 family.

It localises to the golgi apparatus membrane. Its function is as follows. Modulates the O-glycosylation and complex N-glycosylation steps occurring during the Golgi maturation of APP. Inhibits APP transport to the cell surface and further shedding. The protein is Transmembrane protein 59-like (Tmem59l) of Rattus norvegicus (Rat).